Here is a 452-residue protein sequence, read N- to C-terminus: Phenylalanine-4-hydroxylase (452 aa).

Ser16 is modified (phosphoserine; by PKA). Positions Ser36–Lys114 constitute an ACT domain. 3 residues coordinate Fe cation: His285, His290, and Glu330.

It belongs to the biopterin-dependent aromatic amino acid hydroxylase family. In terms of assembly, homodimer and homotetramer. Fe(2+) serves as cofactor. Phosphorylation at Ser-16 increases basal activity and facilitates activation by the substrate phenylalanine.

It carries out the reaction (6R)-L-erythro-5,6,7,8-tetrahydrobiopterin + L-phenylalanine + O2 = (4aS,6R)-4a-hydroxy-L-erythro-5,6,7,8-tetrahydrobiopterin + L-tyrosine. The protein operates within amino-acid degradation; L-phenylalanine degradation; acetoacetate and fumarate from L-phenylalanine: step 1/6. With respect to regulation, N-terminal region of PAH is thought to contain allosteric binding sites for phenylalanine and to constitute an 'inhibitory' domain that regulates the activity of a catalytic domain in the C-terminal portion of the molecule. Catalyzes the hydroxylation of L-phenylalanine to L-tyrosine. The chain is Phenylalanine-4-hydroxylase (PAH) from Homo sapiens (Human).